The sequence spans 429 residues: Threonine synthase (429 aa).

Lysine 107 is subject to N6-(pyridoxal phosphate)lysine.

This sequence belongs to the threonine synthase family. Pyridoxal 5'-phosphate serves as cofactor.

It carries out the reaction O-phospho-L-homoserine + H2O = L-threonine + phosphate. It participates in amino-acid biosynthesis; L-threonine biosynthesis; L-threonine from L-aspartate: step 5/5. In terms of biological role, catalyzes the gamma-elimination of phosphate from L-phosphohomoserine and the beta-addition of water to produce L-threonine. The protein is Threonine synthase (thrC) of Serratia marcescens.